The sequence spans 259 residues: 1-(5-phosphoribosyl)-5-[(5-phosphoribosylamino)methylideneamino] imidazole-4-carboxamide isomerase (259 aa).

Residue Asp8 is the Proton acceptor of the active site. The active-site Proton donor is Asp129.

Belongs to the HisA/HisF family.

It localises to the cytoplasm. The catalysed reaction is 1-(5-phospho-beta-D-ribosyl)-5-[(5-phospho-beta-D-ribosylamino)methylideneamino]imidazole-4-carboxamide = 5-[(5-phospho-1-deoxy-D-ribulos-1-ylimino)methylamino]-1-(5-phospho-beta-D-ribosyl)imidazole-4-carboxamide. Its pathway is amino-acid biosynthesis; L-histidine biosynthesis; L-histidine from 5-phospho-alpha-D-ribose 1-diphosphate: step 4/9. The polypeptide is 1-(5-phosphoribosyl)-5-[(5-phosphoribosylamino)methylideneamino] imidazole-4-carboxamide isomerase (Pelotomaculum thermopropionicum (strain DSM 13744 / JCM 10971 / SI)).